The chain runs to 206 residues: Small ribosomal subunit protein uS4 (206 aa).

Positions 94–157 (RRLDNVVYRL…RSRTYFKNLV (64 aa)) constitute an S4 RNA-binding domain.

It belongs to the universal ribosomal protein uS4 family. Part of the 30S ribosomal subunit. Contacts protein S5. The interaction surface between S4 and S5 is involved in control of translational fidelity.

Functionally, one of the primary rRNA binding proteins, it binds directly to 16S rRNA where it nucleates assembly of the body of the 30S subunit. With S5 and S12 plays an important role in translational accuracy. The chain is Small ribosomal subunit protein uS4 from Chloroflexus aurantiacus (strain ATCC 29364 / DSM 637 / Y-400-fl).